The following is a 68-amino-acid chain: Conotoxin Ar5.3 (68 aa).

Residues 1–19 (MLCLPVFIILLLLASPAAS) form the signal peptide. Residues 20 to 53 (NPLEKRIQNDLIRAALEDADMENDPRSIIDSVKT) constitute a propeptide that is removed on maturation.

This sequence belongs to the conotoxin T superfamily. Post-translationally, contains 2 disulfide bonds that can be either 'C1-C3, C2-C4' or 'C1-C4, C2-C3', since these disulfide connectivities have been observed for conotoxins with cysteine framework V (for examples, see AC P0DQQ7 and AC P81755). Expressed by the venom duct.

Its subcellular location is the secreted. This Conus arenatus (Sand-dusted cone) protein is Conotoxin Ar5.3.